The primary structure comprises 607 residues: Nexilin (607 aa).

Residues 1-14 (MNDVSQKAEIKEML) are compositionally biased toward basic and acidic residues. 2 disordered regions span residues 1 to 143 (MNDV…EDKM) and 165 to 268 (ETEA…RRRI). Serine 16 bears the Phosphoserine mark. Basic and acidic residues-rich tracts occupy residues 40 to 85 (GKFD…RAEQ), 120 to 143 (KTKDPEDLDREEGNGRTNHEEDKM), 167 to 221 (EAKK…HMVN), and 228 to 268 (DRET…RRRI). At serine 172 the chain carries Phosphoserine. A phosphoserine mark is found at serine 281, serine 288, and serine 296. Threonine 301 is subject to Phosphothreonine. Disordered stretches follow at residues 419–444 (NFHEDDDVDVRPAKKSESPFTHKVNM) and 480–514 (AALQKKREDEEEEEGSIVNGSTTEDEEQTRSGAPW). Residues serine 495 and serine 500 each carry the phosphoserine modification. The residue at position 502 (threonine 502) is a Phosphothreonine. One can recognise an Ig-like domain in the interval 513 to 601 (PWFKKPLRNT…GSAASTCILT (89 aa)).

As to quaternary structure, interacts with F-actin.

The protein localises to the cytoplasm. It is found in the cytoskeleton. It localises to the cell junction. Its subcellular location is the adherens junction. The protein resides in the myofibril. The protein localises to the sarcomere. It is found in the z line. Involved in regulating cell migration through association with the actin cytoskeleton. Has an essential role in the maintenance of Z line and sarcomere integrity. The protein is Nexilin of Mus musculus (Mouse).